The sequence spans 395 residues: Indoleacetate--lysine synthetase (395 aa).

Belongs to the ATP-dependent AMP-binding enzyme family.

The enzyme catalyses (indol-3-yl)acetate + L-lysine + ATP = N(6)-[(indole-3-yl)acetyl]-L-lysine + ADP + phosphate + H(+). Conversion of IAA to IAA-lysine. This chain is Indoleacetate--lysine synthetase (iaaL), found in Pseudomonas savastanoi (Pseudomonas syringae pv. savastanoi).